Here is a 142-residue protein sequence, read N- to C-terminus: Large ribosomal subunit protein uL13 (142 aa).

It belongs to the universal ribosomal protein uL13 family. Part of the 50S ribosomal subunit.

In terms of biological role, this protein is one of the early assembly proteins of the 50S ribosomal subunit, although it is not seen to bind rRNA by itself. It is important during the early stages of 50S assembly. In Hydrogenovibrio crunogenus (strain DSM 25203 / XCL-2) (Thiomicrospira crunogena), this protein is Large ribosomal subunit protein uL13.